The primary structure comprises 188 residues: V-type ATP synthase subunit E (188 aa).

It belongs to the V-ATPase E subunit family.

In terms of biological role, produces ATP from ADP in the presence of a proton gradient across the membrane. The chain is V-type ATP synthase subunit E from Thermus thermophilus (strain ATCC BAA-163 / DSM 7039 / HB27).